Here is a 312-residue protein sequence, read N- to C-terminus: tRNA dimethylallyltransferase (312 aa).

Residue 11-18 coordinates ATP; it reads GLTATGKT. 13 to 18 serves as a coordination point for substrate; that stretch reads TATGKT. The segment at 36-39 is interaction with substrate tRNA; sequence DSMC.

This sequence belongs to the IPP transferase family. In terms of assembly, monomer. Requires Mg(2+) as cofactor.

It catalyses the reaction adenosine(37) in tRNA + dimethylallyl diphosphate = N(6)-dimethylallyladenosine(37) in tRNA + diphosphate. In terms of biological role, catalyzes the transfer of a dimethylallyl group onto the adenine at position 37 in tRNAs that read codons beginning with uridine, leading to the formation of N6-(dimethylallyl)adenosine (i(6)A). The chain is tRNA dimethylallyltransferase from Caldicellulosiruptor bescii (strain ATCC BAA-1888 / DSM 6725 / KCTC 15123 / Z-1320) (Anaerocellum thermophilum).